A 504-amino-acid polypeptide reads, in one-letter code: L-amino-acid oxidase (504 aa).

A signal peptide spans 1–18 (MNVFFMFSLLFLATLGSC). Cys28 and Cys191 form a disulfide bridge. Residues 61-62 (MS), 81-82 (EA), Arg89, and 105-108 (GPMR) each bind FAD. Position 108 (Arg108) interacts with substrate. Asn190 carries N-linked (GlcNAc...) asparagine glycosylation. A substrate-binding site is contributed by His241. Val279 contacts FAD. Cysteines 349 and 430 form a disulfide. Asn379 carries an N-linked (GlcNAc...) asparagine glycan. Residue Tyr390 participates in substrate binding. Residues Glu475 and 482–487 (GWIDST) contribute to the FAD site. 482–483 (GW) contacts substrate.

Belongs to the flavin monoamine oxidase family. FIG1 subfamily. As to quaternary structure, homodimer; non-covalently linked. FAD is required as a cofactor. In terms of tissue distribution, expressed by the venom gland.

The protein resides in the secreted. The catalysed reaction is an L-alpha-amino acid + O2 + H2O = a 2-oxocarboxylate + H2O2 + NH4(+). It catalyses the reaction L-leucine + O2 + H2O = 4-methyl-2-oxopentanoate + H2O2 + NH4(+). It carries out the reaction L-phenylalanine + O2 + H2O = 3-phenylpyruvate + H2O2 + NH4(+). The enzyme catalyses L-tryptophan + O2 + H2O = indole-3-pyruvate + H2O2 + NH4(+). The catalysed reaction is L-methionine + O2 + H2O = 4-methylsulfanyl-2-oxobutanoate + H2O2 + NH4(+). It catalyses the reaction L-tyrosine + O2 + H2O = 3-(4-hydroxyphenyl)pyruvate + H2O2 + NH4(+). Catalyzes an oxidative deamination of predominantly hydrophobic and aromatic L-amino acids, thus producing hydrogen peroxide that may contribute to the diverse toxic effects of this enzyme. Is highly active on L-Tyr followed by L-Phe, L-Met, L-Leu, L-Trp, and weakly active on L-Ile, L-Arg, L-Val, L-Lys, and L-Ala. Inhibits ADP- and collagen-induced platelet aggregation. This inhibition is inhibited by catalase, indicating the importance of generated H(2)O(2) for the inhibitory effect. This effect on platelets among snake L-amino-acid oxidases is however controversial, since some of them induce aggregation, whereas the other inhibit agonist-induced aggregation. In vivo, this enzyme induces a rapid, substantial and reversible increase in the paw volume of mice (edema). In addition, myofibrosis, and inflammatory cell infiltration on the paw tissue are also observed. The protein is L-amino-acid oxidase of Daboia russelii (Russel's viper).